A 368-amino-acid chain; its full sequence is Phosphate acyltransferase (368 aa).

The segment at 335-368 is disordered; it reads VSLGDGEHDAGGAGPASPAAGHHAEPSAAQSSKA. Over residues 349 to 368 the composition is skewed to low complexity; it reads PASPAAGHHAEPSAAQSSKA.

This sequence belongs to the PlsX family. Homodimer. Probably interacts with PlsY.

It localises to the cytoplasm. The enzyme catalyses a fatty acyl-[ACP] + phosphate = an acyl phosphate + holo-[ACP]. It participates in lipid metabolism; phospholipid metabolism. In terms of biological role, catalyzes the reversible formation of acyl-phosphate (acyl-PO(4)) from acyl-[acyl-carrier-protein] (acyl-ACP). This enzyme utilizes acyl-ACP as fatty acyl donor, but not acyl-CoA. The chain is Phosphate acyltransferase from Burkholderia multivorans (strain ATCC 17616 / 249).